Consider the following 143-residue polypeptide: Large ribosomal subunit protein uL11 (143 aa).

Belongs to the universal ribosomal protein uL11 family. In terms of assembly, part of the ribosomal stalk of the 50S ribosomal subunit. Interacts with L10 and the large rRNA to form the base of the stalk. L10 forms an elongated spine to which L12 dimers bind in a sequential fashion forming a multimeric L10(L12)X complex. Post-translationally, one or more lysine residues are methylated.

Its function is as follows. Forms part of the ribosomal stalk which helps the ribosome interact with GTP-bound translation factors. The chain is Large ribosomal subunit protein uL11 from Cupriavidus pinatubonensis (strain JMP 134 / LMG 1197) (Cupriavidus necator (strain JMP 134)).